A 414-amino-acid polypeptide reads, in one-letter code: tRNA dimethylallyltransferase (414 aa).

Residue 33-40 coordinates ATP; sequence APTASGKT. 35–40 provides a ligand contact to substrate; it reads TASGKT. Interaction with substrate tRNA stretches follow at residues 58-61, 182-186, and 266-271; these read DSAL, QRITR, and RCVGYR.

It belongs to the IPP transferase family. In terms of assembly, monomer. Mg(2+) is required as a cofactor.

The catalysed reaction is adenosine(37) in tRNA + dimethylallyl diphosphate = N(6)-dimethylallyladenosine(37) in tRNA + diphosphate. In terms of biological role, catalyzes the transfer of a dimethylallyl group onto the adenine at position 37 in tRNAs that read codons beginning with uridine, leading to the formation of N6-(dimethylallyl)adenosine (i(6)A). The chain is tRNA dimethylallyltransferase from Psychrobacter cryohalolentis (strain ATCC BAA-1226 / DSM 17306 / VKM B-2378 / K5).